Consider the following 116-residue polypeptide: Holo-[acyl-carrier-protein] synthase (116 aa).

Mg(2+)-binding residues include D5 and E50.

The protein belongs to the P-Pant transferase superfamily. AcpS family. Requires Mg(2+) as cofactor.

It localises to the cytoplasm. It catalyses the reaction apo-[ACP] + CoA = holo-[ACP] + adenosine 3',5'-bisphosphate + H(+). Transfers the 4'-phosphopantetheine moiety from coenzyme A to a Ser of acyl-carrier-protein. This Campylobacter lari (strain RM2100 / D67 / ATCC BAA-1060) protein is Holo-[acyl-carrier-protein] synthase.